The following is a 1368-amino-acid chain: MAYSFTEKKRIRKSFAKRATVHQVPFLLATQIQSYAQFLQEHASVAQRKSEGLQAAFNAIFPIVSHNGLARMEFVSYHLSNPPFDVKECQQRGLTFHSALRAKVRLIINDRENPTKVKEIKEQEVYMGEIPLMTSTGSFVINGTERVIVSQLHRSPGVFFEHDKGKTHSSGKLLFSARIIPYRGSWLDFEFDPKDILYFRVDRRRKMPVTILLKSIGLTPEQILAHFFVFDNFTLKSDGALMEFVPERLRGEVARFDISDKNGKVVVEKDKRINAKHIRDLDAAGTKLISVPEDYLLGRVLAKNIVDPDTGEVLANANDELTEGVLEKLRDAGVKEIQTLYTNDLDQGPYMSQTLRTDDTVDQTAARIAIYRMMRPGEPPTEDAVEALFQRLFYSEDSYDLSRVGRMKVNSRLNRSEGTGPMVLTDDDILDTIKLLVNLRNGKGEVDDIDHLGNRRVRCVGELAENQFRAGLSRVERAVKERLGQAETENLMPHDLINSKPISSAIREFFGSSQLSQFMDQTNPLSEVTHKRRISALGPGGLTRERAGFEVRDVHPTHYGRVCPIETPEGPNIGLINSLALYAQLNDYGFLETPYRKVENSKLTDQVDYLSAIEEGKYVVAQANATVDKDGNLVDELVSAREGSERETRMVTPDRVQYIDVAPSQIVSAAASLVPFLEHDDANRALMGANMQRQAVPCLRADKPLVGTGVERTVAVDSGTAVQATRGGLVDYVDANRVVIRVNDDEAVAGEVGVDIYNLIKYTRSNQNTNINQRPMVKVGDIVARGDVIADGASTDLGELALGQNMLVAFMPWNGYNFEDSILISERVVAEDRYTSIHIEELSVVARDTKLGPEEITRDISNLAEAQLARLDESGITYIGAEVEAGDVMVGKVTPKGETQLTPEEKLLRAIFGEKASDVKDTSLRVPSGMSGTVIDVQVFTREGVTRDKRAQSIIDEELKRYRLDLNDQLRIVEGDAFQRLERLLVGKVVNGGPKKLAKGTALTKEYLADLDKWHWFDIRPSDDDVATQLEAVKEAIEQKRHDFDLAFEEKRKKLTQGDELPPGVIKMVKVYLAVKRRLQPGDKMAGRHGNKGVVSKITPIEDMPYMADGTPADIVLNPLGVPSRMNVGQILETHLGWAARGLGERIGNMLKAQAKAAEMRKLLGQIYNESGKVEDLDSLSDAEVLELAENLKKGVPFATPVFDGAHEDEIRRMLDLAYPEDIAKEKGLTASKQQVTLFDGRTGEAFERPVTLGVMHMLKLHHLVDDKMHARSTGPYSLVTQQPLGGKAQFGGQRFGEMEVWALEAYGASYVLQEMLTVKSDDVNGRTKVYENIVKGEHSIDAGMPESFNVLVKEIRSLGIDIDLERN.

It belongs to the RNA polymerase beta chain family. The RNAP catalytic core consists of 2 alpha, 1 beta, 1 beta' and 1 omega subunit. When a sigma factor is associated with the core the holoenzyme is formed, which can initiate transcription.

The enzyme catalyses RNA(n) + a ribonucleoside 5'-triphosphate = RNA(n+1) + diphosphate. DNA-dependent RNA polymerase catalyzes the transcription of DNA into RNA using the four ribonucleoside triphosphates as substrates. This is DNA-directed RNA polymerase subunit beta from Ralstonia nicotianae (strain ATCC BAA-1114 / GMI1000) (Ralstonia solanacearum).